Reading from the N-terminus, the 370-residue chain is Tryptophan--tRNA ligase (370 aa).

The 'HIGH' region motif lies at 75-83 (PSGKMHFGH). Positions 255–259 (KMSSS) match the 'KMSKS' region motif.

The protein belongs to the class-I aminoacyl-tRNA synthetase family.

Its subcellular location is the cytoplasm. The catalysed reaction is tRNA(Trp) + L-tryptophan + ATP = L-tryptophyl-tRNA(Trp) + AMP + diphosphate + H(+). This is Tryptophan--tRNA ligase from Methanocaldococcus jannaschii (strain ATCC 43067 / DSM 2661 / JAL-1 / JCM 10045 / NBRC 100440) (Methanococcus jannaschii).